Consider the following 359-residue polypeptide: ELAV-like protein 2 (359 aa).

Positions 1–39 (METQLSNGPTCNNTANGPTTVNNNCSSPVDSGNTEDSKT) are disordered. 2 consecutive RRM domains span residues 39–117 (TNLI…YARP) and 125–205 (ANLY…FANN). The residue at position 221 (serine 221) is a Phosphoserine. One can recognise an RRM 3 domain in the interval 276–354 (WCIFVYNLAP…RVLQVSFKTN (79 aa)).

Belongs to the RRM elav family. Interacts with IGF2BP1. Interacts with MAP1B light chain LC1.

Its function is as follows. RNA-binding protein that binds to the 3' untranslated region (3'UTR) of target mRNAs. Seems to recognize a GAAA motif. Can bind to its own 3'UTR, the FOS 3'UTR and the ID 3'UTR. In Rattus norvegicus (Rat), this protein is ELAV-like protein 2 (Elavl2).